A 102-amino-acid polypeptide reads, in one-letter code: Large ribosomal subunit protein uL23 (102 aa).

Belongs to the universal ribosomal protein uL23 family. In terms of assembly, part of the 50S ribosomal subunit. Contacts protein L29, and trigger factor when it is bound to the ribosome.

Its function is as follows. One of the early assembly proteins it binds 23S rRNA. One of the proteins that surrounds the polypeptide exit tunnel on the outside of the ribosome. Forms the main docking site for trigger factor binding to the ribosome. The protein is Large ribosomal subunit protein uL23 of Methylobacillus flagellatus (strain ATCC 51484 / DSM 6875 / VKM B-1610 / KT).